The sequence spans 353 residues: Keratocan (353 aa).

The N-terminal stretch at 1 to 21 is a signal peptide; that stretch reads MMTLKVCPSLLLLFLVHSVWT. Positions 34–72 constitute an LRRNT domain; it reads EHWSHYTFECPQECFCPPSFPNALYCDNKGLKEIPAIPA. Disulfide bonds link Cys-43–Cys-49 and Cys-47–Cys-59. 10 LRR repeats span residues 73-94, 97-118, 123-143, 144-165, 168-188, 194-214, 215-236, 239-262, 264-283, and 284-305; these read RIWY…PFVN, HLRW…SGVL, RLLY…PLPV, GLEQ…VFSN, NLTM…QSDT, SLMQ…SIPA, NTLQ…YFSA, KVTF…GFNV, SILD…PINA, and HLEH…QICP. The N-linked (GlcNAc...) (keratan sulfate) asparagine glycan is linked to Asn-94. N-linked (GlcNAc...) asparagine glycosylation occurs at Asn-168. N-linked (GlcNAc...) (keratan sulfate) asparagine glycans are attached at residues Asn-223 and Asn-261. Asn-299 carries an N-linked (GlcNAc...) asparagine glycan. A disulfide bridge connects residues Cys-304 and Cys-344.

This sequence belongs to the small leucine-rich proteoglycan (SLRP) family. SLRP class II subfamily. Binds keratan sulfate chains.

The protein resides in the secreted. It is found in the extracellular space. The protein localises to the extracellular matrix. Plays an important role in generating and maintaining a transparent matrix within the corneal stroma. The chain is Keratocan (KERA) from Gallus gallus (Chicken).